Consider the following 179-residue polypeptide: Macro domain-containing protein XCC3184 (179 aa).

The Macro domain occupies 1 to 175; sequence MRIEVWQGDI…AYHQALATQE (175 aa).

Belongs to the MacroD-type family.

The chain is Macro domain-containing protein XCC3184 from Xanthomonas campestris pv. campestris (strain ATCC 33913 / DSM 3586 / NCPPB 528 / LMG 568 / P 25).